A 436-amino-acid chain; its full sequence is GTPase Der (436 aa).

2 EngA-type G domains span residues 4–167 (PVVA…PKEE) and 176–351 (VKFS…DNHS). GTP contacts are provided by residues 10–17 (GRPNVGKS), 57–61 (DTGGI), 119–122 (NKVD), 182–189 (GRPNVGKS), 229–233 (DTAGM), and 294–297 (NKWD). Residues 352 to 436 (LRVQSSMLND…PIRVIARKRK (85 aa)) form the KH-like domain.

This sequence belongs to the TRAFAC class TrmE-Era-EngA-EngB-Septin-like GTPase superfamily. EngA (Der) GTPase family. In terms of assembly, associates with the 50S ribosomal subunit.

Functionally, GTPase that plays an essential role in the late steps of ribosome biogenesis. In Listeria innocua serovar 6a (strain ATCC BAA-680 / CLIP 11262), this protein is GTPase Der.